Here is a 151-residue protein sequence, read N- to C-terminus: Thymosin beta (151 aa).

4 consecutive repeat copies span residues L24–T29, L62–V67, L100–T105, and L134–T139. Residues L24–T139 form a 4 X 6 AA repeat of L-[KH]-[KSH]-[VT]-[EP]-[TV] region.

This sequence belongs to the thymosin beta family. In terms of assembly, interacts (via repeats 1, 2 and 4) with G-actin in a 1:3 ratio. Interacts (via repeats 2 and 3) with F-actin. At the comma stage, enriched in the developing nerve ring (at protein level). Ubiquitously expressed in larvae and adults with enrichment in the spermatheca, the intestinal tract and the posterior bulb of the pharynx (at protein level). Expressed in oocytes and in the gonad (at protein level).

Its subcellular location is the cytoplasm. It localises to the cell cortex. The protein resides in the cell junction. It is found in the cytoskeleton. Its function is as follows. Plays an important role in the organization of the cytoskeleton by regulating actin polymerization in two ways. Firstly, by binding to and sequestering actin monomers (G actin) inhibits actin polymerization. Secondly, by binding directly filamentous actin (F actin) promotes actin polymerization. Regulates the formation of cortical actin in oocytes conferring them enough rigidity to sustain the contractions during ovulation. This is Thymosin beta from Caenorhabditis elegans.